The sequence spans 72 residues: MAKEELLEMRGQVVELLPNAMFRVKLENDHEILGHTAGKMRKNRIRVLVGDEVLVELTPYDLTKGRITYRFK.

Positions 1–72 constitute an S1-like domain; the sequence is MAKEELLEMR…TKGRITYRFK (72 aa).

Belongs to the IF-1 family. Component of the 30S ribosomal translation pre-initiation complex which assembles on the 30S ribosome in the order IF-2 and IF-3, IF-1 and N-formylmethionyl-tRNA(fMet); mRNA recruitment can occur at any time during PIC assembly.

The protein localises to the cytoplasm. Functionally, one of the essential components for the initiation of protein synthesis. Stabilizes the binding of IF-2 and IF-3 on the 30S subunit to which N-formylmethionyl-tRNA(fMet) subsequently binds. Helps modulate mRNA selection, yielding the 30S pre-initiation complex (PIC). Upon addition of the 50S ribosomal subunit IF-1, IF-2 and IF-3 are released leaving the mature 70S translation initiation complex. This Sphingopyxis alaskensis (strain DSM 13593 / LMG 18877 / RB2256) (Sphingomonas alaskensis) protein is Translation initiation factor IF-1.